The sequence spans 313 residues: Ribosomal RNA small subunit methyltransferase H (313 aa).

S-adenosyl-L-methionine-binding positions include 35–37, aspartate 55, phenylalanine 80, aspartate 102, and glutamine 109; that span reads GGH.

The protein belongs to the methyltransferase superfamily. RsmH family.

It is found in the cytoplasm. The enzyme catalyses cytidine(1402) in 16S rRNA + S-adenosyl-L-methionine = N(4)-methylcytidine(1402) in 16S rRNA + S-adenosyl-L-homocysteine + H(+). Specifically methylates the N4 position of cytidine in position 1402 (C1402) of 16S rRNA. The chain is Ribosomal RNA small subunit methyltransferase H from Shewanella woodyi (strain ATCC 51908 / MS32).